A 331-amino-acid chain; its full sequence is Ketol-acid reductoisomerase (NADP(+)) (331 aa).

The 181-residue stretch at 2-182 (ARMYYDTDAN…GGTRAGILET (181 aa)) folds into the KARI N-terminal Rossmann domain. NADP(+) contacts are provided by residues 25–28 (YGSQ), Ser51, Ser53, and 83–86 (DEVQ). His108 is an active-site residue. Residue Gly134 participates in NADP(+) binding. Residues 183–328 (TFREETETDL…KDLRAMFSWL (146 aa)) enclose the KARI C-terminal knotted domain. Mg(2+) contacts are provided by Asp191, Glu195, Glu227, and Glu231. A substrate-binding site is contributed by Ser252.

It belongs to the ketol-acid reductoisomerase family. It depends on Mg(2+) as a cofactor.

The catalysed reaction is (2R)-2,3-dihydroxy-3-methylbutanoate + NADP(+) = (2S)-2-acetolactate + NADPH + H(+). It carries out the reaction (2R,3R)-2,3-dihydroxy-3-methylpentanoate + NADP(+) = (S)-2-ethyl-2-hydroxy-3-oxobutanoate + NADPH + H(+). The protein operates within amino-acid biosynthesis; L-isoleucine biosynthesis; L-isoleucine from 2-oxobutanoate: step 2/4. It functions in the pathway amino-acid biosynthesis; L-valine biosynthesis; L-valine from pyruvate: step 2/4. Its function is as follows. Involved in the biosynthesis of branched-chain amino acids (BCAA). Catalyzes an alkyl-migration followed by a ketol-acid reduction of (S)-2-acetolactate (S2AL) to yield (R)-2,3-dihydroxy-isovalerate. In the isomerase reaction, S2AL is rearranged via a Mg-dependent methyl migration to produce 3-hydroxy-3-methyl-2-ketobutyrate (HMKB). In the reductase reaction, this 2-ketoacid undergoes a metal-dependent reduction by NADPH to yield (R)-2,3-dihydroxy-isovalerate. This chain is Ketol-acid reductoisomerase (NADP(+)), found in Rippkaea orientalis (strain PCC 8801 / RF-1) (Cyanothece sp. (strain PCC 8801)).